Reading from the N-terminus, the 434-residue chain is Tol-Pal system protein TolB (434 aa).

A signal peptide spans 1–24 (MKFSAYLTTLFIVLFSLFIQTVQA).

Belongs to the TolB family. The Tol-Pal system is composed of five core proteins: the inner membrane proteins TolA, TolQ and TolR, the periplasmic protein TolB and the outer membrane protein Pal. They form a network linking the inner and outer membranes and the peptidoglycan layer.

The protein resides in the periplasm. Functionally, part of the Tol-Pal system, which plays a role in outer membrane invagination during cell division and is important for maintaining outer membrane integrity. The chain is Tol-Pal system protein TolB from Histophilus somni (strain 2336) (Haemophilus somnus).